The following is a 616-amino-acid chain: MNSPGGRGKKKGSGGPSSPVPPRPPPPCLASSRPAPRPAPPPQSPHKRNLYYFSYPLFLGFALLRLVAFHLGLLFVWLCQRFSRALMAAKRSSRAAPAPASASPPAPVPGGEVERVRAFHKQAFEYISVALRIDEDEKVGQKEQAVEWYKKGIEELEKGIAVVVTGQGEQCERARRLQAKMMTNLVMAKDRLQLLEKLQPVLQFSKSQMDVYNDSTNLTCRNGHLQSESGAVPKRKDPLTHPSNSLPRSKAIMKTGSTGLSGHHRAPSCSGLSIVSGMRQGPGPTTATHKSTPKTNRTNKPSTPTTAPRKKKDLKNFRNVDSNLANFIMNEIVDNGTAVKFDDIAGQELAKQALQEIVILPSLRPELFTGLRAPARGLLLFGPPGNGKTMLAKAVAAESNATFFNISAASLTSKYVGEGEKLVRALFAVARELQPSIIFIDEVDSLLRERREGEHDASRRLKTEFLIEFDGVQSAGDDRVLVMGATNRPQELDEAVLRRFIKRVYVSLPNEETRLLLLKNLLCKQGSPLTQKELAQLARLTDGYSGSDLTALAKDAALGPIRELKPEQVKNMSASEMRNIRLSDFTESLKKIKRSVSPQTLEAYIRWNKDFGDTTV.

Residues 1–44 (MNSPGGRGKKKGSGGPSSPVPPRPPPPCLASSRPAPRPAPPPQS) form a disordered region. The tract at residues 1-50 (MNSPGGRGKKKGSGGPSSPVPPRPPPPCLASSRPAPRPAPPPQSPHKRNL) is required for nuclear localization. The Cytoplasmic portion of the chain corresponds to 1–56 (MNSPGGRGKKKGSGGPSSPVPPRPPPPCLASSRPAPRPAPPPQSPHKRNLYYFSYP). The segment at 1–80 (MNSPGGRGKK…LGLLFVWLCQ (80 aa)) is required for interaction with ATL1. The required for midbody localization stretch occupies residues 1–194 (MNSPGGRGKK…LVMAKDRLQL (194 aa)). The required for interaction with RTN1 stretch occupies residues 1–300 (MNSPGGRGKK…STPKTNRTNK (300 aa)). The short motif at 4–11 (PGGRGKKK) is the Nuclear localization signal element. 2 stretches are compositionally biased toward pro residues: residues 18 to 28 (SPVPPRPPPPC) and 35 to 44 (APRPAPPPQS). A required for interaction with SSNA1 and microtubules region spans residues 50-87 (LYYFSYPLFLGFALLRLVAFHLGLLFVWLCQRFSRALM). The segment at residues 57–77 (LFLGFALLRLVAFHLGLLFVW) is an intramembrane region (helical). The short motif at 59 to 67 (LGFALLRLV) is the Nuclear export signal element. The Cytoplasmic portion of the chain corresponds to 78–616 (LCQRFSRALM…WNKDFGDTTV (539 aa)). Residues 112 to 196 (EVERVRAFHK…MAKDRLQLLE (85 aa)) are sufficient for interaction with CHMP1B. The required for interaction with microtubules stretch occupies residues 114–200 (ERVRAFHKQA…RLQLLEKLQP (87 aa)). Residues 120–195 (HKQAFEYISV…VMAKDRLQLL (76 aa)) form the MIT domain. Positions 223 to 266 (GHLQSESGAVPKRKDPLTHPSNSLPRSKAIMKTGSTGLSGHHRA) are disordered. The segment at 226–328 (QSESGAVPKR…NVDSNLANFI (103 aa)) is sufficient for interaction with microtubules. The tract at residues 228 to 616 (ESGAVPKRKD…WNKDFGDTTV (389 aa)) is sufficient for microtubule severing. 2 positions are modified to phosphoserine: serine 245 and serine 268. The interval 270-328 (SGLSIVSGMRQGPGPTTATHKSTPKTNRTNKPSTPTTAPRKKKDLKNFRNVDSNLANFI) is required for interaction with microtubules and microtubule severing. Residues 278–311 (MRQGPGPTTATHKSTPKTNRTNKPSTPTTAPRKK) are disordered. Positions 283-306 (GPTTATHKSTPKTNRTNKPSTPTT) are enriched in polar residues. Threonine 306 is subject to Phosphothreonine. Positions 309 to 312 (RKKK) match the Nuclear localization signal motif. The segment at 310–312 (KKK) is required for interaction with microtubules. ATP is bound at residue 382 to 389 (GPPGNGKT). Position 597 is a phosphoserine (serine 597).

The protein belongs to the AAA ATPase family. Spastin subfamily. In terms of assembly, homohexamer. Mostly monomeric, but assembles into hexameric structure for short periods of time. Oligomerization seems to be a prerequisite for catalytic activity. Binding to ATP in a cleft between two adjacent subunits stabilizes the homohexameric form. Binds to microtubules at least in part via the alpha-tubulin and beta-tubulin tails. The hexamer adopts a ring conformation through which microtubules pass prior to being severed. Does not interact strongly with tubulin heterodimers. Interacts (via MIT domain) with CHMP1B; the interaction is direct. Interacts with SSNA1. Interacts with ATL1. Interacts with RTN1. Interacts with ZFYVE27. Interacts with REEP1. Interacts (via MIT domain) with IST1.

The protein resides in the membrane. It localises to the endoplasmic reticulum. The protein localises to the midbody. It is found in the cytoplasm. Its subcellular location is the cytoskeleton. The protein resides in the microtubule organizing center. It localises to the centrosome. The protein localises to the perinuclear region. It is found in the nucleus. Its subcellular location is the spindle. The protein resides in the cell projection. It localises to the axon. It catalyses the reaction n ATP + n H2O + a microtubule = n ADP + n phosphate + (n+1) alpha/beta tubulin heterodimers.. With respect to regulation, allosteric enzyme with a cooperative mechanism; at least two neighbor subunits influence each other strongly in spastin hexamers. Microtubule binding promotes cooperative interactions among spastin subunits. In terms of biological role, ATP-dependent microtubule severing protein that specifically recognizes and cuts microtubules that are polyglutamylated. Preferentially recognizes and acts on microtubules decorated with short polyglutamate tails: severing activity increases as the number of glutamates per tubulin rises from one to eight, but decreases beyond this glutamylation threshold. Severing activity is not dependent on tubulin acetylation or detyrosination. Microtubule severing promotes reorganization of cellular microtubule arrays and the release of microtubules from the centrosome following nucleation. It is critical for the biogenesis and maintenance of complex microtubule arrays in axons, spindles and cilia. SPAST is involved in abscission step of cytokinesis and nuclear envelope reassembly during anaphase in cooperation with the ESCRT-III complex. Recruited at the midbody, probably by IST1, and participates in membrane fission during abscission together with the ESCRT-III complex. Recruited to the nuclear membrane by IST1 and mediates microtubule severing, promoting nuclear envelope sealing and mitotic spindle disassembly during late anaphase. Required for membrane traffic from the endoplasmic reticulum (ER) to the Golgi and endosome recycling. Recruited by IST1 to endosomes and regulates early endosomal tubulation and recycling by mediating microtubule severing. Probably plays a role in axon growth and the formation of axonal branches. The protein is Spastin of Sus scrofa (Pig).